We begin with the raw amino-acid sequence, 432 residues long: MNIKTDGWSKKAHIVVAVSTGIDSMSLLYSLLNDYQHTYRKLTCVHVNHGLREQSYEEEAFLREYCHQHHIDIYIKRLDLSDIVADGNSIQQEARQRRYEWFGDIIAQLRADVLLTAHHLDDQFETIIYRLFTGRSTRNSLGMTYESYFNQYKVYRPMLNLKKTEILAYQYANQIPYYEDMSNQDRKYVRNDIRQRIIPAINENPHLNAHQLLKLKDWHDIELQSLKEQAETFINNEVSKSKYLTYSFSRTAFNELNVNIKSVVMDLLFEKLDCHLAMPQHAYDEWFEQIRNDKSQFNIHVTDEWIIQIAYDKLIIMAKSEMDQYILDRICIRKPGTYEFNDYQIDIHPDLPQQLYPLTVRVRQNGDVYKLNGQKGHKKVSRLFIDKKVTLAERQRIPLIINQENAVLAIGDLYVKENFKEFILISNNGDEL.

Ser19 to Ser24 contacts ATP.

Belongs to the tRNA(Ile)-lysidine synthase family.

The protein localises to the cytoplasm. The catalysed reaction is cytidine(34) in tRNA(Ile2) + L-lysine + ATP = lysidine(34) in tRNA(Ile2) + AMP + diphosphate + H(+). In terms of biological role, ligates lysine onto the cytidine present at position 34 of the AUA codon-specific tRNA(Ile) that contains the anticodon CAU, in an ATP-dependent manner. Cytidine is converted to lysidine, thus changing the amino acid specificity of the tRNA from methionine to isoleucine. The chain is tRNA(Ile)-lysidine synthase from Staphylococcus epidermidis (strain ATCC 35984 / DSM 28319 / BCRC 17069 / CCUG 31568 / BM 3577 / RP62A).